Here is a 382-residue protein sequence, read N- to C-terminus: Glutamyl-tRNA reductase (382 aa).

Residues 38 to 41 (TCNR), Ser85, 90 to 92 (ENQ), and Gln96 each bind substrate. Cys39 functions as the Nucleophile in the catalytic mechanism. 164 to 169 (GAGEMG) lines the NADP(+) pocket.

The protein belongs to the glutamyl-tRNA reductase family. Homodimer.

It carries out the reaction (S)-4-amino-5-oxopentanoate + tRNA(Glu) + NADP(+) = L-glutamyl-tRNA(Glu) + NADPH + H(+). Its pathway is porphyrin-containing compound metabolism; protoporphyrin-IX biosynthesis; 5-aminolevulinate from L-glutamyl-tRNA(Glu): step 1/2. Its function is as follows. Catalyzes the NADPH-dependent reduction of glutamyl-tRNA(Glu) to glutamate 1-semialdehyde (GSA). In Methanococcus maripaludis (strain C5 / ATCC BAA-1333), this protein is Glutamyl-tRNA reductase.